A 407-amino-acid chain; its full sequence is Elongation factor Tu (407 aa).

The tr-type G domain maps to 10–217 (KPHVNVGTIG…TLDTYIPDPE (208 aa)). The G1 stretch occupies residues 19–26 (GHVDHGKT). GTP is bound at residue 19-26 (GHVDHGKT). Mg(2+) is bound at residue Thr26. The G2 stretch occupies residues 60-64 (GITIS). Positions 81–84 (DCPG) are G3. Residues 81 to 85 (DCPGH) and 136 to 139 (NKSD) each bind GTP. Positions 136 to 139 (NKSD) are G4. The G5 stretch occupies residues 184 to 186 (SAL).

Belongs to the TRAFAC class translation factor GTPase superfamily. Classic translation factor GTPase family. EF-Tu/EF-1A subfamily. As to quaternary structure, monomer.

It localises to the cytoplasm. The catalysed reaction is GTP + H2O = GDP + phosphate + H(+). Its function is as follows. GTP hydrolase that promotes the GTP-dependent binding of aminoacyl-tRNA to the A-site of ribosomes during protein biosynthesis. In Marinomonas sp. (strain MWYL1), this protein is Elongation factor Tu.